Here is a 485-residue protein sequence, read N- to C-terminus: UDP-N-acetylmuramoyl-L-alanyl-D-glutamate--2,6-diaminopimelate ligase (485 aa).

Ser30 is a UDP-N-acetyl-alpha-D-muramoyl-L-alanyl-D-glutamate binding site. 113 to 119 (GTNGKTT) provides a ligand contact to ATP. UDP-N-acetyl-alpha-D-muramoyl-L-alanyl-D-glutamate-binding positions include 155–156 (TT), Ser182, and Arg190. At Lys222 the chain carries N6-carboxylysine. Residues Arg381, 405–408 (DNPR), Gly455, and Glu459 each bind meso-2,6-diaminopimelate. The short motif at 405 to 408 (DNPR) is the Meso-diaminopimelate recognition motif element.

It belongs to the MurCDEF family. MurE subfamily. It depends on Mg(2+) as a cofactor. In terms of processing, carboxylation is probably crucial for Mg(2+) binding and, consequently, for the gamma-phosphate positioning of ATP.

The protein localises to the cytoplasm. The catalysed reaction is UDP-N-acetyl-alpha-D-muramoyl-L-alanyl-D-glutamate + meso-2,6-diaminopimelate + ATP = UDP-N-acetyl-alpha-D-muramoyl-L-alanyl-gamma-D-glutamyl-meso-2,6-diaminopimelate + ADP + phosphate + H(+). It participates in cell wall biogenesis; peptidoglycan biosynthesis. Its function is as follows. Catalyzes the addition of meso-diaminopimelic acid to the nucleotide precursor UDP-N-acetylmuramoyl-L-alanyl-D-glutamate (UMAG) in the biosynthesis of bacterial cell-wall peptidoglycan. In Clostridium tetani (strain Massachusetts / E88), this protein is UDP-N-acetylmuramoyl-L-alanyl-D-glutamate--2,6-diaminopimelate ligase.